The following is a 159-amino-acid chain: Serine-protein kinase RsbW (159 aa).

It belongs to the anti-sigma-factor family.

It carries out the reaction L-seryl-[protein] + ATP = O-phospho-L-seryl-[protein] + ADP + H(+). It catalyses the reaction L-threonyl-[protein] + ATP = O-phospho-L-threonyl-[protein] + ADP + H(+). In terms of biological role, negative regulator of sigma-B activity. Phosphorylates and inactivates its specific antagonist protein, RsbV. Upon phosphorylation of RsbV, RsbW is released and binds to sigma-B, thereby blocking its ability to form an RNA polymerase holoenzyme (E-sigma-B). This Staphylococcus epidermidis protein is Serine-protein kinase RsbW.